Consider the following 186-residue polypeptide: MDFYYLPGSAPCRAVQMTAAAVGVELNLKLTDLMKGEHMKPEFLKLNPQHCIPTLVDEDGFVLWESRAIQIYLVEKYCAHDPALAERLYPGDPRRRAVVHQRLFFDVAILYQRFAEYYYPQIFGKKVAGDPDRLRSMEQALEFLNTFLEGERFVAGGDDPTIADFSILACILDCNVRRCRVRSAAI.

A GST N-terminal domain is found at 1 to 81; the sequence is MDFYYLPGSA…YLVEKYCAHD (81 aa). Residues S9, 50–52, and 65–67 each bind glutathione; these read HCI and ESR. One can recognise a GST C-terminal domain in the interval 92–186; it reads DPRRRAVVHQ…RRCRVRSAAI (95 aa).

The protein belongs to the GST superfamily. Theta family. As to quaternary structure, homodimer.

The catalysed reaction is RX + glutathione = an S-substituted glutathione + a halide anion + H(+). Functionally, conjugation of reduced glutathione to a wide number of exogenous and endogenous hydrophobic electrophiles. The chain is Glutathione S-transferase 1, isoform A from Anopheles gambiae (African malaria mosquito).